The sequence spans 132 residues: NADH-quinone oxidoreductase subunit A (132 aa).

Transmembrane regions (helical) follow at residues 14-34 (FFTF…ISWI), 66-86 (FYLV…LYAW), and 96-116 (IGFI…IYLI).

The protein belongs to the complex I subunit 3 family. NDH-1 is composed of 13 different subunits. Subunits NuoA, H, J, K, L, M, N constitute the membrane sector of the complex.

It is found in the cell membrane. The enzyme catalyses a quinone + NADH + 5 H(+)(in) = a quinol + NAD(+) + 4 H(+)(out). In terms of biological role, NDH-1 shuttles electrons from NADH, via FMN and iron-sulfur (Fe-S) centers, to quinones in the respiratory chain. The immediate electron acceptor for the enzyme in this species is believed to be ubiquinone. Couples the redox reaction to proton translocation (for every two electrons transferred, four hydrogen ions are translocated across the cytoplasmic membrane), and thus conserves the redox energy in a proton gradient. The chain is NADH-quinone oxidoreductase subunit A from Buchnera aphidicola subsp. Baizongia pistaciae (strain Bp).